The following is a 103-amino-acid chain: Large ribosomal subunit protein uL24 (103 aa).

A disordered region spans residues Tyr70 to Asn103.

The protein belongs to the universal ribosomal protein uL24 family. Part of the 50S ribosomal subunit.

One of two assembly initiator proteins, it binds directly to the 5'-end of the 23S rRNA, where it nucleates assembly of the 50S subunit. Functionally, one of the proteins that surrounds the polypeptide exit tunnel on the outside of the subunit. This is Large ribosomal subunit protein uL24 from Lactiplantibacillus plantarum (strain ATCC BAA-793 / NCIMB 8826 / WCFS1) (Lactobacillus plantarum).